Here is a 1097-residue protein sequence, read N- to C-terminus: DNA-directed RNA polymerase subunit beta (1097 aa).

Positions 1072-1097 (QDVNPRRSTPSRPTYESLGVADYDED) are disordered.

The protein belongs to the RNA polymerase beta chain family. In cyanobacteria the RNAP catalytic core is composed of 2 alpha, 1 beta, 1 beta', 1 gamma and 1 omega subunit. When a sigma factor is associated with the core the holoenzyme is formed, which can initiate transcription.

It carries out the reaction RNA(n) + a ribonucleoside 5'-triphosphate = RNA(n+1) + diphosphate. In terms of biological role, DNA-dependent RNA polymerase catalyzes the transcription of DNA into RNA using the four ribonucleoside triphosphates as substrates. The polypeptide is DNA-directed RNA polymerase subunit beta (Prochlorococcus marinus (strain MIT 9303)).